Reading from the N-terminus, the 124-residue chain is CRISPR-associated endoribonuclease Cas2 4 (124 aa).

Aspartate 40 is a binding site for Mg(2+).

This sequence belongs to the CRISPR-associated endoribonuclease Cas2 protein family. Homodimer, forms a heterotetramer with a Cas1 homodimer. Mg(2+) serves as cofactor.

CRISPR (clustered regularly interspaced short palindromic repeat), is an adaptive immune system that provides protection against mobile genetic elements (viruses, transposable elements and conjugative plasmids). CRISPR clusters contain sequences complementary to antecedent mobile elements and target invading nucleic acids. CRISPR clusters are transcribed and processed into CRISPR RNA (crRNA). Functions as a ssRNA-specific endoribonuclease. Involved in the integration of spacer DNA into the CRISPR cassette. The sequence is that of CRISPR-associated endoribonuclease Cas2 4 from Rhodospirillum rubrum (strain ATCC 11170 / ATH 1.1.1 / DSM 467 / LMG 4362 / NCIMB 8255 / S1).